Here is a 306-residue protein sequence, read N- to C-terminus: ClpXP adapter protein SpxH (306 aa).

It belongs to the SpxH family. In terms of assembly, interacts with Spx.

The protein resides in the cytoplasm. In terms of biological role, adapter protein required for efficient degradation of Spx by ClpXP under non-stress conditions. Interaction with Spx stabilizes Spx and exposes the C-terminus of Spx for recognition and proteolysis by ClpXP. This chain is ClpXP adapter protein SpxH, found in Halalkalibacterium halodurans (strain ATCC BAA-125 / DSM 18197 / FERM 7344 / JCM 9153 / C-125) (Bacillus halodurans).